The primary structure comprises 200 residues: Small ribosomal subunit protein uS4 (200 aa).

The 64-residue stretch at 92-155 folds into the S4 RNA-binding domain; it reads SRLDAVVYSL…QNLDIIKESV (64 aa).

Belongs to the universal ribosomal protein uS4 family. As to quaternary structure, part of the 30S ribosomal subunit. Contacts protein S5. The interaction surface between S4 and S5 is involved in control of translational fidelity.

Functionally, one of the primary rRNA binding proteins, it binds directly to 16S rRNA where it nucleates assembly of the body of the 30S subunit. Its function is as follows. With S5 and S12 plays an important role in translational accuracy. The chain is Small ribosomal subunit protein uS4 from Staphylococcus epidermidis (strain ATCC 35984 / DSM 28319 / BCRC 17069 / CCUG 31568 / BM 3577 / RP62A).